The following is a 147-amino-acid chain: Hemoglobin subunit beta (147 aa).

Val2 is modified (N-acetylvaline). The region spanning 3–147 (HLTPEEKSAV…VANALAHKYH (145 aa)) is the Globin domain. Position 13 is a phosphothreonine (Thr13). Ser45 bears the Phosphoserine mark. Residue Lys60 is modified to N6-acetyllysine. His64 is a binding site for heme b. At Lys83 the chain carries N6-acetyllysine. His93 serves as a coordination point for heme b. An S-nitrosocysteine modification is found at Cys94. Lys145 carries the N6-acetyllysine modification.

This sequence belongs to the globin family. As to quaternary structure, heterotetramer of two alpha chains and two beta chains in adult hemoglobin A (HbA). Red blood cells.

In terms of biological role, involved in oxygen transport from the lung to the various peripheral tissues. The polypeptide is Hemoglobin subunit beta (HBB) (Pan paniscus (Pygmy chimpanzee)).